A 1070-amino-acid chain; its full sequence is Carbamoyl phosphate synthase large chain (1070 aa).

Residues 1–401 (MPKRDDIKTI…ALLKAVRSLE (401 aa)) form a carboxyphosphate synthetic domain region. 12 residues coordinate ATP: R129, R169, G175, G176, K208, I210, E215, G241, I242, H243, Q284, and E298. The 195-residue stretch at 133–327 (RDLMNELGEP…IAKLAAKIAV (195 aa)) folds into the ATP-grasp 1 domain. Mg(2+) is bound by residues Q284, E298, and N300. Residues Q284, E298, and N300 each coordinate Mn(2+). An oligomerization domain region spans residues 402–546 (IGADHLLLEE…YSTYEEENES (145 aa)). A carbamoyl phosphate synthetic domain region spans residues 547 to 929 (TRSAKESVIV…ALYKGFVASG (383 aa)). The region spanning 671 to 861 (EKALEILQIP…MANVATRVIL (191 aa)) is the ATP-grasp 2 domain. Positions 707, 746, 748, 752, 777, 778, 779, 780, 820, and 832 each coordinate ATP. Positions 820, 832, and 834 each coordinate Mg(2+). The Mn(2+) site is built by Q820, E832, and N834. An MGS-like domain is found at 930–1070 (TTMHDYGTVL…SEVKQPKARV (141 aa)). The tract at residues 930-1070 (TTMHDYGTVL…SEVKQPKARV (141 aa)) is allosteric domain.

The protein belongs to the CarB family. Composed of two chains; the small (or glutamine) chain promotes the hydrolysis of glutamine to ammonia, which is used by the large (or ammonia) chain to synthesize carbamoyl phosphate. Tetramer of heterodimers (alpha,beta)4. Mg(2+) serves as cofactor. Mn(2+) is required as a cofactor.

The enzyme catalyses hydrogencarbonate + L-glutamine + 2 ATP + H2O = carbamoyl phosphate + L-glutamate + 2 ADP + phosphate + 2 H(+). It catalyses the reaction hydrogencarbonate + NH4(+) + 2 ATP = carbamoyl phosphate + 2 ADP + phosphate + 2 H(+). It functions in the pathway amino-acid biosynthesis; L-arginine biosynthesis; carbamoyl phosphate from bicarbonate: step 1/1. The protein operates within pyrimidine metabolism; UMP biosynthesis via de novo pathway; (S)-dihydroorotate from bicarbonate: step 1/3. In terms of biological role, large subunit of the glutamine-dependent carbamoyl phosphate synthetase (CPSase). CPSase catalyzes the formation of carbamoyl phosphate from the ammonia moiety of glutamine, carbonate, and phosphate donated by ATP, constituting the first step of 2 biosynthetic pathways, one leading to arginine and/or urea and the other to pyrimidine nucleotides. The large subunit (synthetase) binds the substrates ammonia (free or transferred from glutamine from the small subunit), hydrogencarbonate and ATP and carries out an ATP-coupled ligase reaction, activating hydrogencarbonate by forming carboxy phosphate which reacts with ammonia to form carbamoyl phosphate. The protein is Carbamoyl phosphate synthase large chain of Listeria monocytogenes serotype 4b (strain F2365).